The primary structure comprises 92 residues: Small ribosomal subunit protein uS19c (92 aa).

It belongs to the universal ribosomal protein uS19 family.

The protein resides in the plastid. Its subcellular location is the chloroplast. Functionally, protein S19 forms a complex with S13 that binds strongly to the 16S ribosomal RNA. This is Small ribosomal subunit protein uS19c from Populus alba (White poplar).